Consider the following 429-residue polypeptide: Serine--tRNA ligase (429 aa).

An L-serine-binding site is contributed by 235–237 (TAE). 266–268 (RSE) contributes to the ATP binding site. Glutamate 289 contacts L-serine. 353 to 356 (EISS) serves as a coordination point for ATP. Position 389 (serine 389) interacts with L-serine.

This sequence belongs to the class-II aminoacyl-tRNA synthetase family. Type-1 seryl-tRNA synthetase subfamily. Homodimer. The tRNA molecule binds across the dimer.

It localises to the cytoplasm. The catalysed reaction is tRNA(Ser) + L-serine + ATP = L-seryl-tRNA(Ser) + AMP + diphosphate + H(+). It catalyses the reaction tRNA(Sec) + L-serine + ATP = L-seryl-tRNA(Sec) + AMP + diphosphate + H(+). Its pathway is aminoacyl-tRNA biosynthesis; selenocysteinyl-tRNA(Sec) biosynthesis; L-seryl-tRNA(Sec) from L-serine and tRNA(Sec): step 1/1. In terms of biological role, catalyzes the attachment of serine to tRNA(Ser). Is also able to aminoacylate tRNA(Sec) with serine, to form the misacylated tRNA L-seryl-tRNA(Sec), which will be further converted into selenocysteinyl-tRNA(Sec). The chain is Serine--tRNA ligase from Histophilus somni (strain 2336) (Haemophilus somnus).